The chain runs to 105 residues: Large ribosomal subunit protein uL24 (105 aa).

This sequence belongs to the universal ribosomal protein uL24 family. In terms of assembly, part of the 50S ribosomal subunit.

Functionally, one of two assembly initiator proteins, it binds directly to the 5'-end of the 23S rRNA, where it nucleates assembly of the 50S subunit. One of the proteins that surrounds the polypeptide exit tunnel on the outside of the subunit. The sequence is that of Large ribosomal subunit protein uL24 from Methylocella silvestris (strain DSM 15510 / CIP 108128 / LMG 27833 / NCIMB 13906 / BL2).